The chain runs to 332 residues: UPF0194 membrane protein YbhG (332 aa).

Residues 1–16 (MMKKPVVIGLAVVVLA) form the signal peptide. Positions 107 to 209 (NEEIAQAAAA…LNLQDSTLIA (103 aa)) form a coiled coil.

It belongs to the UPF0194 family.

The protein resides in the periplasm. The sequence is that of UPF0194 membrane protein YbhG from Escherichia coli (strain K12 / MC4100 / BW2952).